We begin with the raw amino-acid sequence, 325 residues long: Ribosomal RNA small subunit methyltransferase H (325 aa).

Residues 39–41, Asp59, Phe90, Asp108, and Gln115 contribute to the S-adenosyl-L-methionine site; that span reads GGH.

Belongs to the methyltransferase superfamily. RsmH family.

It localises to the cytoplasm. It carries out the reaction cytidine(1402) in 16S rRNA + S-adenosyl-L-methionine = N(4)-methylcytidine(1402) in 16S rRNA + S-adenosyl-L-homocysteine + H(+). Functionally, specifically methylates the N4 position of cytidine in position 1402 (C1402) of 16S rRNA. This Leptothrix cholodnii (strain ATCC 51168 / LMG 8142 / SP-6) (Leptothrix discophora (strain SP-6)) protein is Ribosomal RNA small subunit methyltransferase H.